The primary structure comprises 84 residues: Small nuclear ribonucleoprotein E (84 aa).

Residues 13 to 84 (INFIFKLLQQ…GDNITLIQAI (72 aa)) enclose the Sm domain.

The protein belongs to the snRNP Sm proteins family. Component of the Sm core complex, present in spliceosomal snRNP U1, U2, U4/U6 and U5. The core complex contains smb1, smd1, smd2, smd3, sme1, smf1 and smg1 (Sm proteins B, D1, D2, D3, E, F and G, respectively), and is probably a heptameric ring structure.

It localises to the cytoplasm. The protein resides in the nucleus. Functionally, involved in pre-mRNA splicing. Binds and is required for the stability of snRNA U1, U2, U4 and U5 which contain a highly conserved structural motif called the Sm binding site. Involved in cap modification. In Schizosaccharomyces pombe (strain 972 / ATCC 24843) (Fission yeast), this protein is Small nuclear ribonucleoprotein E.